Here is a 376-residue protein sequence, read N- to C-terminus: Homeobox protein extradenticle (376 aa).

The interval 1–37 (MEDPNRMLAHTGGMMAPQGYGLSGQDDGQNAGSENEV) is disordered. The PBC domain maps to 38–237 (RKQKDIGEIL…VMILRSRFLD (200 aa)). Residues 45–124 (EILQQIMSIS…EGVAGPEKGG (80 aa)) form a PBC-A region. Residues 127–237 (AAAASAAAAS…VMILRSRFLD (111 aa)) form a PBC-B region. The homeobox; TALE-type DNA-binding region spans 238–300 (ARRKRRNFSK…NKRIRYKKNI (63 aa)). Positions 318–335 (ASPYSMAGPPSGTTTPMM) are enriched in low complexity. Positions 318–376 (ASPYSMAGPPSGTTTPMMSPAPPQDSMGYPMGSGGYDQQQPYDNSMGGYDPNLHQDLSP) are disordered.

The protein belongs to the TALE/PBX homeobox family. As to quaternary structure, interacts with Ubx and hth. In terms of tissue distribution, prior to full germband retraction it is ubiquitously present, after germband retraction, mostly present in the anterior portion of the ventral nerve cord.

It is found in the nucleus. Functionally, transcription factor which acts with the selector homeodomain proteins altering the regulation of downstream target genes such as wingless (wg), teashirt (tsh) and decapentaplegic (dpp), thus affecting segmental identity. Delimits the eye field and prevent inappropriate eye development. Required for proper localization of chordotonal organs within the peripheral nervous system. This chain is Homeobox protein extradenticle (exd), found in Drosophila melanogaster (Fruit fly).